The following is a 160-amino-acid chain: Large ribosomal subunit protein uL22c (160 aa).

Belongs to the universal ribosomal protein uL22 family. Part of the 50S ribosomal subunit.

It localises to the plastid. The protein localises to the chloroplast. Functionally, this protein binds specifically to 23S rRNA. Its function is as follows. The globular domain of the protein is located near the polypeptide exit tunnel on the outside of the subunit, while an extended beta-hairpin is found that lines the wall of the exit tunnel in the center of the 70S ribosome. The polypeptide is Large ribosomal subunit protein uL22c (rpl22) (Panax ginseng (Korean ginseng)).